Consider the following 472-residue polypeptide: ATP-dependent rRNA helicase rrp3 (472 aa).

The disordered stretch occupies residues 1–51 (MPDVKKRKIAHEAPEHGSDAESTSSHESVAQQDDTAETQDEAAATETRPAP). Residues 10–19 (AHEAPEHGSD) show a composition bias toward basic and acidic residues. Positions 20–29 (AESTSSHESV) are enriched in polar residues. Residues 52-80 (KSFKDLGIIDQLCEACETMGYKAPTPIQA) carry the Q motif motif. The Helicase ATP-binding domain maps to 83-254 (IPLALQGRDL…RASLSNPLRV (172 aa)). Residue 96-103 (AETGSGKT) coordinates ATP. Residues 202-205 (DEAD) carry the DEAD box motif. One can recognise a Helicase C-terminal domain in the interval 282-426 (YLVYLLNEFV…EYELEKDEVM (145 aa)). Residues 451–472 (GTKAKKFGKGKRSRDEMDQEEG) are disordered. Basic residues predominate over residues 452–462 (TKAKKFGKGKR).

It belongs to the DEAD box helicase family. DDX47/RRP3 subfamily. Interacts with the SSU processome.

Its subcellular location is the nucleus. The enzyme catalyses ATP + H2O = ADP + phosphate + H(+). Functionally, ATP-dependent rRNA helicase required for pre-ribosomal RNA processing. Involved in the maturation of the 35S-pre-rRNA and to its cleavage to mature 18S rRNA. The chain is ATP-dependent rRNA helicase rrp3 from Neosartorya fischeri (strain ATCC 1020 / DSM 3700 / CBS 544.65 / FGSC A1164 / JCM 1740 / NRRL 181 / WB 181) (Aspergillus fischerianus).